The following is a 353-amino-acid chain: Photosystem II protein D1 (353 aa).

The residue at position 2 (Thr-2) is an N-acetylthreonine. Thr-2 carries the post-translational modification Phosphothreonine. 3 consecutive transmembrane segments (helical) span residues 29 to 46 (YIGWFGVLMIPTLLTATS), 118 to 133 (HFLLGVACYMGREWEL), and 142 to 156 (WIAVAYSAPVAAATA). His-118 is a chlorophyll a binding site. Position 126 (Tyr-126) interacts with pheophytin a. [CaMn4O5] cluster contacts are provided by Asp-170 and Glu-189. A helical transmembrane segment spans residues 197-218 (FHMLGVAGVFGGSLFSAMHGSL). Position 198 (His-198) interacts with chlorophyll a. Residues His-215 and 264–265 (SF) contribute to the a quinone site. Fe cation is bound at residue His-215. His-272 contributes to the Fe cation binding site. The helical transmembrane segment at 274–288 (FLAAWPVVGIWFTAL) threads the bilayer. Positions 332, 333, 342, and 344 each coordinate [CaMn4O5] cluster. Positions 345-353 (AVEAPSTNG) are excised as a propeptide.

It belongs to the reaction center PufL/M/PsbA/D family. As to quaternary structure, PSII is composed of 1 copy each of membrane proteins PsbA, PsbB, PsbC, PsbD, PsbE, PsbF, PsbH, PsbI, PsbJ, PsbK, PsbL, PsbM, PsbT, PsbX, PsbY, PsbZ, Psb30/Ycf12, at least 3 peripheral proteins of the oxygen-evolving complex and a large number of cofactors. It forms dimeric complexes. Requires The D1/D2 heterodimer binds P680, chlorophylls that are the primary electron donor of PSII, and subsequent electron acceptors. It shares a non-heme iron and each subunit binds pheophytin, quinone, additional chlorophylls, carotenoids and lipids. D1 provides most of the ligands for the Mn4-Ca-O5 cluster of the oxygen-evolving complex (OEC). There is also a Cl(-1) ion associated with D1 and D2, which is required for oxygen evolution. The PSII complex binds additional chlorophylls, carotenoids and specific lipids. as cofactor. Tyr-161 forms a radical intermediate that is referred to as redox-active TyrZ, YZ or Y-Z. In terms of processing, C-terminally processed by CTPA; processing is essential to allow assembly of the oxygen-evolving complex and thus photosynthetic growth.

Its subcellular location is the plastid. It is found in the chloroplast thylakoid membrane. The enzyme catalyses 2 a plastoquinone + 4 hnu + 2 H2O = 2 a plastoquinol + O2. In terms of biological role, photosystem II (PSII) is a light-driven water:plastoquinone oxidoreductase that uses light energy to abstract electrons from H(2)O, generating O(2) and a proton gradient subsequently used for ATP formation. It consists of a core antenna complex that captures photons, and an electron transfer chain that converts photonic excitation into a charge separation. The D1/D2 (PsbA/PsbD) reaction center heterodimer binds P680, the primary electron donor of PSII as well as several subsequent electron acceptors. In Nymphaea alba (White water-lily), this protein is Photosystem II protein D1.